Here is a 206-residue protein sequence, read N- to C-terminus: Small ribosomal subunit protein uS4 (206 aa).

The S4 RNA-binding domain occupies 96-156 (GRLDNVVYRM…EKSKNQLRIQ (61 aa)).

This sequence belongs to the universal ribosomal protein uS4 family. As to quaternary structure, part of the 30S ribosomal subunit. Contacts protein S5. The interaction surface between S4 and S5 is involved in control of translational fidelity.

One of the primary rRNA binding proteins, it binds directly to 16S rRNA where it nucleates assembly of the body of the 30S subunit. Functionally, with S5 and S12 plays an important role in translational accuracy. The chain is Small ribosomal subunit protein uS4 from Saccharophagus degradans (strain 2-40 / ATCC 43961 / DSM 17024).